Consider the following 179-residue polypeptide: uncharacterized protein (179 aa).

Residues 160–179 (QPIEPNGTQPATETKTPVGV) are disordered. Polar residues predominate over residues 165–179 (NGTQPATETKTPVGV).

This sequence belongs to the Dps family.

This is an uncharacterized protein from Anabaena variabilis.